The chain runs to 201 residues: Holliday junction branch migration complex subunit RuvA (201 aa).

The interval 1–61 (MIEFVKGTID…EDAFSLYGFS (61 aa)) is domain I. The domain II stretch occupies residues 62-140 (TREEKALFTK…DVVPEMIDNL (79 aa)). Residues 141 to 150 (FNHEARIEKQ) form a flexible linker region. Residues 151–201 (EAETALDEALEALRVLGYAEKEIKKVLPHLKEETALSTDQYVKKALQKLLK) are domain III.

This sequence belongs to the RuvA family. As to quaternary structure, homotetramer. Forms an RuvA(8)-RuvB(12)-Holliday junction (HJ) complex. HJ DNA is sandwiched between 2 RuvA tetramers; dsDNA enters through RuvA and exits via RuvB. An RuvB hexamer assembles on each DNA strand where it exits the tetramer. Each RuvB hexamer is contacted by two RuvA subunits (via domain III) on 2 adjacent RuvB subunits; this complex drives branch migration. In the full resolvosome a probable DNA-RuvA(4)-RuvB(12)-RuvC(2) complex forms which resolves the HJ.

Its subcellular location is the cytoplasm. Its function is as follows. The RuvA-RuvB-RuvC complex processes Holliday junction (HJ) DNA during genetic recombination and DNA repair, while the RuvA-RuvB complex plays an important role in the rescue of blocked DNA replication forks via replication fork reversal (RFR). RuvA specifically binds to HJ cruciform DNA, conferring on it an open structure. The RuvB hexamer acts as an ATP-dependent pump, pulling dsDNA into and through the RuvAB complex. HJ branch migration allows RuvC to scan DNA until it finds its consensus sequence, where it cleaves and resolves the cruciform DNA. This is Holliday junction branch migration complex subunit RuvA from Bacillus velezensis (strain DSM 23117 / BGSC 10A6 / LMG 26770 / FZB42) (Bacillus amyloliquefaciens subsp. plantarum).